The sequence spans 427 residues: UPF0229 protein YeaH (427 aa).

The segment covering 79-90 (NDHFIQNDRIER) has biased composition (basic and acidic residues). A disordered region spans residues 79-110 (NDHFIQNDRIERPQGGGGGSGSGQGQASQDGE). The segment covering 92-102 (QGGGGGSGSGQ) has biased composition (gly residues).

It belongs to the UPF0229 family.

This chain is UPF0229 protein YeaH, found in Salmonella paratyphi B (strain ATCC BAA-1250 / SPB7).